The sequence spans 766 residues: Ent-copalyl diphosphate synthase 3 (766 aa).

The N-terminal 30 residues, 1-30, are a transit peptide targeting the chloroplast; sequence FRSTAAGRCLPVTCCVFPRHFRVSSSSILP. Lys-222 lines the substrate pocket. Mg(2+)-binding residues include Asp-354 and Asp-356. Positions 354-357 match the DXDD motif motif; it reads DVDD. Residue Lys-440 participates in substrate binding.

Belongs to the terpene synthase family. Tpsc subfamily. Requires Mg(2+) as cofactor. Accumulates in leaves, and, at low levels, in germinating seeds.

It is found in the plastid. The protein resides in the chloroplast. The catalysed reaction is (2E,6E,10E)-geranylgeranyl diphosphate = ent-copalyl diphosphate. Its pathway is plant hormone biosynthesis; gibberellin biosynthesis. The protein operates within secondary metabolite biosynthesis; terpenoid biosynthesis. In terms of biological role, involved in the biosynthesis of ent-kaurene diterpenoids natural products such as oridonin, miltiradiene, eriocalyxin B and nezukol, known to exhibit antitumor, anti-inflammatory and antibacterial activities, and in the production of gibberellins phytohormones. Catalyzes the conversion of (2E,6E,10E)-geranylgeranyl diphosphate (GGPP) to ent-copalyl diphosphate (ent-CPP). This Isodon eriocalyx (Plectranthus eriocalyx) protein is Ent-copalyl diphosphate synthase 3.